The chain runs to 292 residues: L-serine dehydratase, alpha chain (292 aa).

The protein belongs to the iron-sulfur dependent L-serine dehydratase family. As to quaternary structure, heterooctamer of four alpha chains and four beta chains. Requires [4Fe-4S] cluster as cofactor.

It carries out the reaction L-serine = pyruvate + NH4(+). Its pathway is carbohydrate biosynthesis; gluconeogenesis. The protein is L-serine dehydratase, alpha chain (sdhA) of Peptoniphilus asaccharolyticus (Peptostreptococcus asaccharolyticus).